Here is a 99-residue protein sequence, read N- to C-terminus: Integration host factor subunit alpha (99 aa).

The tract at residues 49–75 is disordered; sequence FGNFDLRDKNQRPGRNPKTGEDIPITA.

This sequence belongs to the bacterial histone-like protein family. As to quaternary structure, heterodimer of an alpha and a beta chain.

This protein is one of the two subunits of integration host factor, a specific DNA-binding protein that functions in genetic recombination as well as in transcriptional and translational control. In Klebsiella pneumoniae (strain 342), this protein is Integration host factor subunit alpha.